The sequence spans 235 residues: RNA pyrophosphohydrolase (235 aa).

Residues Gly-6–Thr-149 enclose the Nudix hydrolase domain. The Nudix box signature appears at Gly-38–Gly-59. The disordered stretch occupies residues Ala-184 to Thr-235.

This sequence belongs to the Nudix hydrolase family. RppH subfamily. It depends on a divalent metal cation as a cofactor.

Accelerates the degradation of transcripts by removing pyrophosphate from the 5'-end of triphosphorylated RNA, leading to a more labile monophosphorylated state that can stimulate subsequent ribonuclease cleavage. This is RNA pyrophosphohydrolase from Polaromonas naphthalenivorans (strain CJ2).